The primary structure comprises 447 residues: Probable glycine dehydrogenase (decarboxylating) subunit 1 (447 aa).

This sequence belongs to the GcvP family. N-terminal subunit subfamily. In terms of assembly, the glycine cleavage system is composed of four proteins: P, T, L and H. In this organism, the P 'protein' is a heterodimer of two subunits.

It carries out the reaction N(6)-[(R)-lipoyl]-L-lysyl-[glycine-cleavage complex H protein] + glycine + H(+) = N(6)-[(R)-S(8)-aminomethyldihydrolipoyl]-L-lysyl-[glycine-cleavage complex H protein] + CO2. The glycine cleavage system catalyzes the degradation of glycine. The P protein binds the alpha-amino group of glycine through its pyridoxal phosphate cofactor; CO(2) is released and the remaining methylamine moiety is then transferred to the lipoamide cofactor of the H protein. This Bacillus mycoides (strain KBAB4) (Bacillus weihenstephanensis) protein is Probable glycine dehydrogenase (decarboxylating) subunit 1.